The chain runs to 441 residues: MSVLLRSGLGPLCAVARAAIPFIWRGKYFSSGNEPAENPVTPMLRHLMYKIKSTGPITVAEYMKEVLTNPAKGYYVYRDMLGEKGDFITSPEISQIFGELLGIWFISEWMATGKSTAFQLVELGPGRGTLVGDILRVFTQLGSVLKNCDISVHLVEVSQKLSEIQALTLTKEKVPLERNAGSPVYMKGVTKSGIPISWYRDLHDVPKGYSFYLAHEFFDVLPVHKFQKTPQGWREVFVDIDPQVSDKLRFVLAPSATPAEAFIQHDETRDHVEVCPDAGVIIEELSQRIALTGGAALVADYGHDGTKTDTFRGFCDHKLHDVLIAPGTADLTADVDFSYLRRMAQGKVASLGPIKQHTFLKNMGIDVRLKVLLDKSNEPSVRQQLLQGYDMLMNPKKMGERFNFFALLPHQRLQGGRYQRNARQSKPFASVVAGFSELAWQ.

The N-terminal 46 residues, methionine 1 to histidine 46, are a transit peptide targeting the mitochondrion.

Belongs to the NDUFAF7 family. As to quaternary structure, interacts with NDUFS2.

Its subcellular location is the mitochondrion. The catalysed reaction is L-arginyl-[protein] + 2 S-adenosyl-L-methionine = N(omega),N(omega)'-dimethyl-L-arginyl-[protein] + 2 S-adenosyl-L-homocysteine + 2 H(+). Arginine methyltransferase involved in the assembly or stability of mitochondrial NADH:ubiquinone oxidoreductase complex (complex I). Acts by mediating symmetric dimethylation of 'Arg-118' of NDUFS2 after it assembles into the complex I, stabilizing the early intermediate complex. This is Protein arginine methyltransferase NDUFAF7, mitochondrial from Homo sapiens (Human).